Reading from the N-terminus, the 280-residue chain is Large ribosomal subunit protein uL2cz/uL2cy (280 aa).

Disordered stretches follow at residues methionine 1–asparagine 25 and proline 231–lysine 280.

The protein belongs to the universal ribosomal protein uL2 family. Part of the 50S ribosomal subunit.

The protein localises to the plastid. Its subcellular location is the chloroplast. The chain is Large ribosomal subunit protein uL2cz/uL2cy (rpl2-A) from Platanus occidentalis (Sycamore).